We begin with the raw amino-acid sequence, 100 residues long: Nucleoid-associated protein MYPU_0500 (100 aa).

Belongs to the YbaB/EbfC family. In terms of assembly, homodimer.

Its subcellular location is the cytoplasm. The protein resides in the nucleoid. Functionally, binds to DNA and alters its conformation. May be involved in regulation of gene expression, nucleoid organization and DNA protection. In Mycoplasmopsis pulmonis (strain UAB CTIP) (Mycoplasma pulmonis), this protein is Nucleoid-associated protein MYPU_0500.